The chain runs to 287 residues: Pyridoxal kinase PdxY (287 aa).

Residues Ser-9 and 44 to 45 (TQ) contribute to the substrate site. Residues Asp-111, Ala-143, Glu-148, Lys-181, and 208 to 211 (RPLV) each bind ATP. Substrate is bound at residue Asp-223.

The protein belongs to the pyridoxine kinase family. PdxY subfamily. In terms of assembly, homodimer. Requires Mg(2+) as cofactor.

The enzyme catalyses pyridoxal + ATP = pyridoxal 5'-phosphate + ADP + H(+). It participates in cofactor metabolism; pyridoxal 5'-phosphate salvage; pyridoxal 5'-phosphate from pyridoxal: step 1/1. Its function is as follows. Pyridoxal kinase involved in the salvage pathway of pyridoxal 5'-phosphate (PLP). Catalyzes the phosphorylation of pyridoxal to PLP. This is Pyridoxal kinase PdxY from Photorhabdus laumondii subsp. laumondii (strain DSM 15139 / CIP 105565 / TT01) (Photorhabdus luminescens subsp. laumondii).